A 447-amino-acid polypeptide reads, in one-letter code: N-succinylarginine dihydrolase (447 aa).

Residues 19–28 (AGLSFGNEAS), Asn-110, and 137–138 (HR) each bind substrate. Residue Glu-174 is part of the active site. Position 212 (Arg-212) interacts with substrate. His-248 is a catalytic residue. Substrate-binding residues include Asp-250 and Asn-359. Cys-365 (nucleophile) is an active-site residue.

The protein belongs to the succinylarginine dihydrolase family. In terms of assembly, homodimer.

The catalysed reaction is N(2)-succinyl-L-arginine + 2 H2O + 2 H(+) = N(2)-succinyl-L-ornithine + 2 NH4(+) + CO2. It participates in amino-acid degradation; L-arginine degradation via AST pathway; L-glutamate and succinate from L-arginine: step 2/5. Its function is as follows. Catalyzes the hydrolysis of N(2)-succinylarginine into N(2)-succinylornithine, ammonia and CO(2). The polypeptide is N-succinylarginine dihydrolase (Salmonella arizonae (strain ATCC BAA-731 / CDC346-86 / RSK2980)).